Reading from the N-terminus, the 331-residue chain is Aspartate carbamoyltransferase catalytic subunit (331 aa).

The carbamoyl phosphate site is built by Arg62 and Thr63. Position 90 (Lys90) interacts with L-aspartate. Carbamoyl phosphate contacts are provided by Arg112, His145, and Gln148. L-aspartate is bound by residues Arg185 and Arg246. Carbamoyl phosphate-binding residues include Gly287 and Pro288.

This sequence belongs to the aspartate/ornithine carbamoyltransferase superfamily. ATCase family. In terms of assembly, heterododecamer (2C3:3R2) of six catalytic PyrB chains organized as two trimers (C3), and six regulatory PyrI chains organized as three dimers (R2).

The catalysed reaction is carbamoyl phosphate + L-aspartate = N-carbamoyl-L-aspartate + phosphate + H(+). The protein operates within pyrimidine metabolism; UMP biosynthesis via de novo pathway; (S)-dihydroorotate from bicarbonate: step 2/3. Its function is as follows. Catalyzes the condensation of carbamoyl phosphate and aspartate to form carbamoyl aspartate and inorganic phosphate, the committed step in the de novo pyrimidine nucleotide biosynthesis pathway. The sequence is that of Aspartate carbamoyltransferase catalytic subunit from Synechocystis sp. (strain ATCC 27184 / PCC 6803 / Kazusa).